A 261-amino-acid chain; its full sequence is Cytochrome c oxidase subunit 3 (261 aa).

The Mitochondrial matrix segment spans residues Met-1–Pro-15. A helical transmembrane segment spans residues Trp-16–Trp-34. Topologically, residues Phe-35–Met-40 are mitochondrial intermembrane. A helical membrane pass occupies residues Thr-41–Thr-66. The Mitochondrial matrix portion of the chain corresponds to Phe-67–Thr-72. A helical membrane pass occupies residues Pro-73–Ser-105. Over Leu-106–Glu-128 the chain is Mitochondrial intermembrane. Residues Val-129–Met-152 traverse the membrane as a helical segment. Topologically, residues Glu-153 to Asp-155 are mitochondrial matrix. Residues Arg-156–Glu-183 traverse the membrane as a helical segment. Topologically, residues Ala-184–Asp-190 are mitochondrial intermembrane. Residues Gly-191–Leu-223 form a helical membrane-spanning segment. Over Lys-224 to His-232 the chain is Mitochondrial matrix. Residues Phe-233–Ile-256 traverse the membrane as a helical segment. At Tyr-257–Ser-261 the chain is on the mitochondrial intermembrane side.

The protein belongs to the cytochrome c oxidase subunit 3 family. In terms of assembly, component of the cytochrome c oxidase (complex IV, CIV), a multisubunit enzyme composed of 14 subunits. The complex is composed of a catalytic core of 3 subunits MT-CO1, MT-CO2 and MT-CO3, encoded in the mitochondrial DNA, and 11 supernumerary subunits COX4I1 (or COX4I2), COX5A, COX5B, COX6A2 (or COX6A1), COX6B1 (or COX6B2), COX6C, COX7A1 (or COX7A2), COX7B, COX7C, COX8B and NDUFA4, which are encoded in the nuclear genome. The complex exists as a monomer or a dimer and forms supercomplexes (SCs) in the inner mitochondrial membrane with NADH-ubiquinone oxidoreductase (complex I, CI) and ubiquinol-cytochrome c oxidoreductase (cytochrome b-c1 complex, complex III, CIII), resulting in different assemblies (supercomplex SCI(1)III(2)IV(1) and megacomplex MCI(2)III(2)IV(2)).

It is found in the mitochondrion inner membrane. The catalysed reaction is 4 Fe(II)-[cytochrome c] + O2 + 8 H(+)(in) = 4 Fe(III)-[cytochrome c] + 2 H2O + 4 H(+)(out). Its function is as follows. Component of the cytochrome c oxidase, the last enzyme in the mitochondrial electron transport chain which drives oxidative phosphorylation. The respiratory chain contains 3 multisubunit complexes succinate dehydrogenase (complex II, CII), ubiquinol-cytochrome c oxidoreductase (cytochrome b-c1 complex, complex III, CIII) and cytochrome c oxidase (complex IV, CIV), that cooperate to transfer electrons derived from NADH and succinate to molecular oxygen, creating an electrochemical gradient over the inner membrane that drives transmembrane transport and the ATP synthase. Cytochrome c oxidase is the component of the respiratory chain that catalyzes the reduction of oxygen to water. Electrons originating from reduced cytochrome c in the intermembrane space (IMS) are transferred via the dinuclear copper A center (CU(A)) of subunit 2 and heme A of subunit 1 to the active site in subunit 1, a binuclear center (BNC) formed by heme A3 and copper B (CU(B)). The BNC reduces molecular oxygen to 2 water molecules using 4 electrons from cytochrome c in the IMS and 4 protons from the mitochondrial matrix. This chain is Cytochrome c oxidase subunit 3 (MT-CO3), found in Bos taurus (Bovine).